Here is a 257-residue protein sequence, read N- to C-terminus: Deoxyribose-phosphate aldolase (257 aa).

Catalysis depends on aspartate 102, which acts as the Proton donor/acceptor. The active-site Schiff-base intermediate with acetaldehyde is the lysine 166. The Proton donor/acceptor role is filled by lysine 198.

The protein belongs to the DeoC/FbaB aldolase family. DeoC type 2 subfamily.

Its subcellular location is the cytoplasm. The enzyme catalyses 2-deoxy-D-ribose 5-phosphate = D-glyceraldehyde 3-phosphate + acetaldehyde. It functions in the pathway carbohydrate degradation; 2-deoxy-D-ribose 1-phosphate degradation; D-glyceraldehyde 3-phosphate and acetaldehyde from 2-deoxy-alpha-D-ribose 1-phosphate: step 2/2. Catalyzes a reversible aldol reaction between acetaldehyde and D-glyceraldehyde 3-phosphate to generate 2-deoxy-D-ribose 5-phosphate. The protein is Deoxyribose-phosphate aldolase of Shewanella woodyi (strain ATCC 51908 / MS32).